The primary structure comprises 731 residues: Nucleolar GTP-binding protein 2 (731 aa).

2 disordered regions span residues 1-27 (MGKGKNHDRKANPGFGKVKSKSGTSTG) and 130-162 (LQDDTKDSGSRPHIVETEPFGDTFGPKAQRKRP). Residues 132 to 145 (DDTKDSGSRPHIVE) are compositionally biased toward basic and acidic residues. Residues 223–396 (WGELYKVLDS…LIDCPGIVPV (174 aa)) form the CP-type G domain. GTP contacts are provided by residues 345-352 (GYPNTGKS) and 389-393 (DCPGI). 2 disordered regions span residues 517–541 (TTEAEKKKTEAEEQELAEERETMEI) and 585–731 (EEEV…KKRR). Residues 519-541 (EAEKKKTEAEEQELAEERETMEI) are compositionally biased toward basic and acidic residues. The segment covering 597-655 (EKEEEEEEEEDEDEDEEEEELAWEDVFPEEADAVDGGEEVEESDKEETDDEEDVDEEEA) has biased composition (acidic residues). Residues 685–698 (TNKQKATNFYTHAN) are compositionally biased toward polar residues. Residues 699-715 (VKNRNRDRKVPKNPGKR) are compositionally biased toward basic residues.

It belongs to the TRAFAC class YlqF/YawG GTPase family. NOG2 subfamily.

The protein localises to the nucleus. It is found in the nucleolus. GTPase that associates with pre-60S ribosomal subunits in the nucleolus and is required for their nuclear export and maturation. The protein is Nucleolar GTP-binding protein 2 (NOG2) of Cryptococcus gattii (Filobasidiella gattii).